We begin with the raw amino-acid sequence, 224 residues long: UPF0758 protein PSHAa2643 (224 aa).

The MPN domain maps to 102 to 224 (IFNSPNAVYD…CVSFAERGLI (123 aa)). Residues His173, His175, and Asp186 each coordinate Zn(2+). The short motif at 173 to 186 (HNHPSGIAEPSQAD) is the JAMM motif element.

The protein belongs to the UPF0758 family.

The protein is UPF0758 protein PSHAa2643 of Pseudoalteromonas translucida (strain TAC 125).